Here is a 282-residue protein sequence, read N- to C-terminus: Putative 1-acyl-sn-glycerol-3-phosphate acyltransferase acl-2 (282 aa).

2 helical membrane passes run 4–24 and 32–52; these read FWSI…NIST and ISFY…TMIP. Positions 98–103 match the HXXXXD motif motif; sequence HQSSLD. The chain crosses the membrane as a helical span at residues 122-142; that stretch reads ILAYVPFFNLGAYFSNTIFID.

The protein belongs to the 1-acyl-sn-glycerol-3-phosphate acyltransferase family.

It localises to the membrane. The enzyme catalyses a 1-acyl-sn-glycero-3-phosphate + an acyl-CoA = a 1,2-diacyl-sn-glycero-3-phosphate + CoA. It functions in the pathway phospholipid metabolism; CDP-diacylglycerol biosynthesis; CDP-diacylglycerol from sn-glycerol 3-phosphate: step 2/3. Converts lysophosphatidic acid (LPA) into phosphatidic acid by incorporating an acyl moiety at the sn-2 position of the glycerol backbone. The chain is Putative 1-acyl-sn-glycerol-3-phosphate acyltransferase acl-2 (acl-2) from Caenorhabditis elegans.